The following is a 230-amino-acid chain: uncharacterized protein (230 aa).

A helical transmembrane segment spans residues 19-39; it reads GIFQVLLQLVLAMMTVWDFAG. Asn-41 is a glycosylation site (N-linked (GlcNAc...) asparagine; by host). The helical transmembrane segment at 55–75 threads the bilayer; the sequence is SFLLVLYTGLKQILEYMFSIC. N-linked (GlcNAc...) asparagine; by host glycans are attached at residues Asn-86, Asn-157, Asn-168, and Asn-182. A coiled-coil region spans residues 172–196; the sequence is TNLHKYQNDENDTEEDSEDIEKNSD. A disordered region spans residues 178–205; that stretch reads QNDENDTEEDSEDIEKNSDPKENSDIDS. Over residues 180–190 the composition is skewed to acidic residues; the sequence is DENDTEEDSED. Residues 191 to 201 are compositionally biased toward basic and acidic residues; the sequence is IEKNSDPKENS.

It is found in the membrane. This is an uncharacterized protein from Acanthamoeba polyphaga mimivirus (APMV).